Consider the following 158-residue polypeptide: NADPH-dependent 7-cyano-7-deazaguanine reductase (158 aa).

The active-site Thioimide intermediate is the cysteine 56. The Proton donor role is filled by aspartate 63. Substrate is bound by residues 78 to 80 and 97 to 98; these read LES and HE.

It belongs to the GTP cyclohydrolase I family. QueF type 1 subfamily.

The protein localises to the cytoplasm. The catalysed reaction is 7-aminomethyl-7-carbaguanine + 2 NADP(+) = 7-cyano-7-deazaguanine + 2 NADPH + 3 H(+). The protein operates within tRNA modification; tRNA-queuosine biosynthesis. Functionally, catalyzes the NADPH-dependent reduction of 7-cyano-7-deazaguanine (preQ0) to 7-aminomethyl-7-deazaguanine (preQ1). The chain is NADPH-dependent 7-cyano-7-deazaguanine reductase from Nitrobacter winogradskyi (strain ATCC 25391 / DSM 10237 / CIP 104748 / NCIMB 11846 / Nb-255).